Consider the following 219-residue polypeptide: Protein-L-isoaspartate O-methyltransferase (219 aa).

Ser65 is an active-site residue.

This sequence belongs to the methyltransferase superfamily. L-isoaspartyl/D-aspartyl protein methyltransferase family. Monomer.

It localises to the cytoplasm. It carries out the reaction [protein]-L-isoaspartate + S-adenosyl-L-methionine = [protein]-L-isoaspartate alpha-methyl ester + S-adenosyl-L-homocysteine. Its function is as follows. Catalyzes the methyl esterification of L-isoaspartyl residues in peptides and proteins that result from spontaneous decomposition of normal L-aspartyl and L-asparaginyl residues. It plays a role in the repair and/or degradation of damaged proteins. This is Protein-L-isoaspartate O-methyltransferase (pcm) from Pyrococcus furiosus (strain ATCC 43587 / DSM 3638 / JCM 8422 / Vc1).